We begin with the raw amino-acid sequence, 458 residues long: Bifunctional protein GlmU (458 aa).

The pyrophosphorylase stretch occupies residues 1 to 229 (MNKFAIVLAA…FDESLGVNDR (229 aa)). UDP-N-acetyl-alpha-D-glucosamine is bound by residues 8 to 11 (LAAG), Lys22, Gln72, and 77 to 78 (GT). Asp102 is a Mg(2+) binding site. Positions 139, 154, 169, and 227 each coordinate UDP-N-acetyl-alpha-D-glucosamine. Asn227 is a binding site for Mg(2+). The linker stretch occupies residues 230–250 (VALSQAEATMRKRINHEHMVN). The segment at 251–458 (GVTLIDPATT…AKKMPHYRGQ (208 aa)) is N-acetyltransferase. UDP-N-acetyl-alpha-D-glucosamine is bound by residues Arg332 and Lys350. His362 serves as the catalytic Proton acceptor. UDP-N-acetyl-alpha-D-glucosamine is bound by residues Tyr365 and Asn376. Residues Ala379, Ser404, Ala422, and Arg439 each coordinate acetyl-CoA.

The protein in the N-terminal section; belongs to the N-acetylglucosamine-1-phosphate uridyltransferase family. It in the C-terminal section; belongs to the transferase hexapeptide repeat family. In terms of assembly, homotrimer. Mg(2+) serves as cofactor.

It is found in the cytoplasm. It carries out the reaction alpha-D-glucosamine 1-phosphate + acetyl-CoA = N-acetyl-alpha-D-glucosamine 1-phosphate + CoA + H(+). The enzyme catalyses N-acetyl-alpha-D-glucosamine 1-phosphate + UTP + H(+) = UDP-N-acetyl-alpha-D-glucosamine + diphosphate. It participates in nucleotide-sugar biosynthesis; UDP-N-acetyl-alpha-D-glucosamine biosynthesis; N-acetyl-alpha-D-glucosamine 1-phosphate from alpha-D-glucosamine 6-phosphate (route II): step 2/2. The protein operates within nucleotide-sugar biosynthesis; UDP-N-acetyl-alpha-D-glucosamine biosynthesis; UDP-N-acetyl-alpha-D-glucosamine from N-acetyl-alpha-D-glucosamine 1-phosphate: step 1/1. Its pathway is bacterial outer membrane biogenesis; LPS lipid A biosynthesis. Functionally, catalyzes the last two sequential reactions in the de novo biosynthetic pathway for UDP-N-acetylglucosamine (UDP-GlcNAc). The C-terminal domain catalyzes the transfer of acetyl group from acetyl coenzyme A to glucosamine-1-phosphate (GlcN-1-P) to produce N-acetylglucosamine-1-phosphate (GlcNAc-1-P), which is converted into UDP-GlcNAc by the transfer of uridine 5-monophosphate (from uridine 5-triphosphate), a reaction catalyzed by the N-terminal domain. This chain is Bifunctional protein GlmU, found in Lactococcus lactis subsp. cremoris (strain MG1363).